The chain runs to 611 residues: Probable Xaa-Pro aminopeptidase P (611 aa).

Residues aspartate 408, aspartate 419, glutamate 517, and glutamate 531 each contribute to the Mn(2+) site.

The protein belongs to the peptidase M24B family. It depends on Mn(2+) as a cofactor.

It catalyses the reaction Release of any N-terminal amino acid, including proline, that is linked to proline, even from a dipeptide or tripeptide.. Functionally, catalyzes the removal of a penultimate prolyl residue from the N-termini of peptides. This Coccidioides posadasii (strain RMSCC 757 / Silveira) (Valley fever fungus) protein is Probable Xaa-Pro aminopeptidase P (AMPP).